A 272-amino-acid chain; its full sequence is Phosphoglycolate phosphatase (272 aa).

The active-site Nucleophile is Asp19. 3 residues coordinate Mg(2+): Asp19, Asp21, and Asp182.

It belongs to the HAD-like hydrolase superfamily. CbbY/CbbZ/Gph/YieH family. Requires Mg(2+) as cofactor.

The enzyme catalyses 2-phosphoglycolate + H2O = glycolate + phosphate. Its pathway is organic acid metabolism; glycolate biosynthesis; glycolate from 2-phosphoglycolate: step 1/1. Functionally, specifically catalyzes the dephosphorylation of 2-phosphoglycolate. Is involved in the dissimilation of the intracellular 2-phosphoglycolate formed during the DNA repair of 3'-phosphoglycolate ends, a major class of DNA lesions induced by oxidative stress. The sequence is that of Phosphoglycolate phosphatase from Pseudomonas putida (strain ATCC 47054 / DSM 6125 / CFBP 8728 / NCIMB 11950 / KT2440).